Here is a 328-residue protein sequence, read N- to C-terminus: Phosphate acyltransferase (328 aa).

This sequence belongs to the PlsX family. In terms of assembly, homodimer. Probably interacts with PlsY.

It localises to the cytoplasm. The catalysed reaction is a fatty acyl-[ACP] + phosphate = an acyl phosphate + holo-[ACP]. It participates in lipid metabolism; phospholipid metabolism. In terms of biological role, catalyzes the reversible formation of acyl-phosphate (acyl-PO(4)) from acyl-[acyl-carrier-protein] (acyl-ACP). This enzyme utilizes acyl-ACP as fatty acyl donor, but not acyl-CoA. This Geobacillus thermodenitrificans (strain NG80-2) protein is Phosphate acyltransferase.